A 410-amino-acid polypeptide reads, in one-letter code: MTVFSALLLAGVLSALALAVGGAVGMRLTSRVVEQRQRVATEWSGITVSQMLQCIVTLMPLGAAVVDTHRDVVYLNERAKELGLVRDRQLDDQAWRAARQALGGEDVEFDLSPRKRSATGRSGLSVHGHARLLSEEDRRFAVVFVHDQSDYARMEAARRDFVANVSHELKTPVGAMALLAEALLASADDSETVRRFAEKVLIEANRLGDMVAELIELSRLQGAERLPNMTDVDVDTIVSEAISRHKVAADNADIEVRTDAPSNLRVLGDQTLLVTALANLVSNAIAYSPRGSLVSISRRRRGANIEIAVTDRGIGIAPEDQERVFERFFRGDKARSRATGGSGLGLAIVKHVAANHDGTIRVWSKPGTGSTFTLALPALIEAYHDDERPEQAREPELRSNRSQREEELSR.

Transmembrane regions (helical) follow at residues 6 to 26 (ALLL…AVGM) and 46 to 66 (ITVS…AAVV). Positions 164 to 380 (NVSHELKTPV…TFTLALPALI (217 aa)) constitute a Histidine kinase domain. The residue at position 167 (histidine 167) is a Phosphohistidine; by autocatalysis. The disordered stretch occupies residues 385–410 (DDERPEQAREPELRSNRSQREEELSR).

In terms of processing, autophosphorylated.

It is found in the cell membrane. The enzyme catalyses ATP + protein L-histidine = ADP + protein N-phospho-L-histidine.. Its function is as follows. Member of the two-component regulatory system SenX3/RegX3. Autophosphorylates, and then transfers the phosphate group to RegX3. The protein is Sensor-like histidine kinase SenX3 of Mycobacterium bovis (strain ATCC BAA-935 / AF2122/97).